The chain runs to 437 residues: uncharacterized protein (437 aa).

3 stretches are compositionally biased toward basic residues: residues 1-29, 81-91, and 101-118; these read MDTP…RHRN, LRGRHPRVRRV, and RRRH…GRNR. Disordered regions lie at residues 1–31 and 77–437; these read MDTP…RNDH and EHVP…QGTR. Over residues 119 to 132 the composition is skewed to basic and acidic residues; it reads HAGDRRAPGVDSRL. Residues 133–142 show a composition bias toward basic residues; that stretch reads RQQHQHPRGR. The segment covering 143–164 has biased composition (basic and acidic residues); sequence HASDRVQDGAHPRRQRLREQPR. A compositionally biased stretch (basic residues) spans 165 to 190; that stretch reads HAGRPRRRQPPRRGRSRGTHRRHLRQ. Composition is skewed to basic and acidic residues over residues 198–209 and 217–253; these read GPDEDQAREFRG and HPPT…EAGR. 2 stretches are compositionally biased toward basic residues: residues 284–293 and 324–348; these read TVHRGGRLRG and PHSR…RVRH. The span at 371–382 shows a compositional bias: low complexity; the sequence is DAAAYASVPAHA.

This is an uncharacterized protein from Haloferax lucentense (strain DSM 14919 / JCM 9276 / NCIMB 13854 / Aa 2.2) (Haloferax alicantei).